A 122-amino-acid chain; its full sequence is UPF0145 protein Bmul_3577/BMULJ_04940 (122 aa).

Belongs to the UPF0145 family.

This chain is UPF0145 protein Bmul_3577/BMULJ_04940, found in Burkholderia multivorans (strain ATCC 17616 / 249).